A 362-amino-acid chain; its full sequence is Solute carrier family 25 member 3 (362 aa).

A mitochondrion-targeting transit peptide spans Met-1 to Ala-49. The Mitochondrial intermembrane segment spans residues Ala-50–Arg-63. Solcar repeat units lie at residues Arg-63–Leu-147, Trp-160–Ala-244, and Glu-261–Tyr-339. The helical transmembrane segment at Phe-64–Leu-86 threads the bilayer. Over Asp-87–Lys-121 the chain is Mitochondrial matrix. Lys-99 is subject to N6-acetyllysine. The residue at position 112 (Lys-112) is an N6-methyllysine. A helical membrane pass occupies residues Gly-122 to Tyr-141. Topologically, residues Glu-142 to Arg-161 are mitochondrial intermembrane. A helical transmembrane segment spans residues Thr-162–Met-183. At Glu-184–Lys-218 the chain is on the mitochondrial matrix side. Residue Tyr-196 is modified to Phosphotyrosine. Lys-209 carries the post-translational modification N6-acetyllysine. A helical membrane pass occupies residues Gly-219–Phe-238. Residues Glu-239–Glu-261 lie on the Mitochondrial intermembrane side of the membrane. A helical membrane pass occupies residues Gln-262–Ala-284. Residues Asp-285–Gly-314 lie on the Mitochondrial matrix side of the membrane. The helical transmembrane segment at Leu-315–Tyr-333 threads the bilayer. At Asp-334 to Gln-362 the chain is on the mitochondrial intermembrane side.

Belongs to the mitochondrial carrier (TC 2.A.29) family. Interacts with PPIF; the interaction is impaired by CsA. As to expression, expressed in heart, diaphragm and skeletal muscle (at protein level). Not detected in liver, lung, brain, and kidney (at protein level). Ubiquitous (at protein level).

It is found in the mitochondrion inner membrane. The catalysed reaction is phosphate(in) + H(+)(in) = phosphate(out) + H(+)(out). Up-regulated in the presence of cardiolipin. Functionally, inorganic ion transporter that transports phosphate or copper ions across the mitochondrial inner membrane into the matrix compartment. Mediates proton-coupled symport of phosphate ions necessary for mitochondrial oxidative phosphorylation of ADP to ATP. Transports copper ions probably in the form of anionic copper(I) complexes to maintain mitochondrial matrix copper pool and to supply copper for cytochrome C oxidase complex assembly. May also play a role in regulation of the mitochondrial permeability transition pore (mPTP). The polypeptide is Solute carrier family 25 member 3 (Bos taurus (Bovine)).